The following is a 413-amino-acid chain: Multifunctional CCA protein (413 aa).

The ATP site is built by G8 and R11. 2 residues coordinate CTP: G8 and R11. Residues D21 and D23 each coordinate Mg(2+). The ATP site is built by R91, R143, and R146. CTP is bound by residues R91, R143, and R146. Residues 232–333 (TGVHVMMVVD…VRFFERSDAL (102 aa)) form the HD domain.

This sequence belongs to the tRNA nucleotidyltransferase/poly(A) polymerase family. Bacterial CCA-adding enzyme type 1 subfamily. Monomer. Can also form homodimers and oligomers. Requires Mg(2+) as cofactor. It depends on Ni(2+) as a cofactor.

The enzyme catalyses a tRNA precursor + 2 CTP + ATP = a tRNA with a 3' CCA end + 3 diphosphate. It carries out the reaction a tRNA with a 3' CCA end + 2 CTP + ATP = a tRNA with a 3' CCACCA end + 3 diphosphate. Functionally, catalyzes the addition and repair of the essential 3'-terminal CCA sequence in tRNAs without using a nucleic acid template. Adds these three nucleotides in the order of C, C, and A to the tRNA nucleotide-73, using CTP and ATP as substrates and producing inorganic pyrophosphate. tRNA 3'-terminal CCA addition is required both for tRNA processing and repair. Also involved in tRNA surveillance by mediating tandem CCA addition to generate a CCACCA at the 3' terminus of unstable tRNAs. While stable tRNAs receive only 3'-terminal CCA, unstable tRNAs are marked with CCACCA and rapidly degraded. The protein is Multifunctional CCA protein of Burkholderia ambifaria (strain MC40-6).